The primary structure comprises 202 residues: MYLGRIISIGSSKDGVYASYRVSSRSFPNRKSVVNNQKVAIIPTQGSEDDIYKNPYISYNCIDIIDDICVVTNGSHTDIIAGKIREGMNMKDAVALSLLTMDYEKDDYNTPRIGGAINTKGEGYIGIVTHEGIEVKKVNPGESFYVSTYEHNTPREVDYTATNAKEATEFIFNGGIFSEFTHPVTSCAAFNKDEWEIDFKNP.

The protein belongs to the archaeal IMP cyclohydrolase family.

The enzyme catalyses IMP + H2O = 5-formamido-1-(5-phospho-D-ribosyl)imidazole-4-carboxamide. The protein operates within purine metabolism; IMP biosynthesis via de novo pathway; IMP from 5-formamido-1-(5-phospho-D-ribosyl)imidazole-4-carboxamide: step 1/1. Catalyzes the cyclization of 5-formylamidoimidazole-4-carboxamide ribonucleotide to IMP. This chain is IMP cyclohydrolase, found in Methanosphaera stadtmanae (strain ATCC 43021 / DSM 3091 / JCM 11832 / MCB-3).